A 449-amino-acid chain; its full sequence is Serum response factor homolog (449 aa).

Residues 23-166 are disordered; it reads LADPADMYGN…PPANGKKTKG (144 aa). Residues 69-80 are compositionally biased toward polar residues; that stretch reads QCQTLHSPQHAS. Residues 81 to 107 show a composition bias toward low complexity; it reads QQQQQQQQQQQQHQQQQQQQQQHPQQQ. At Ser-156 the chain carries Phosphoserine. The MADS-box domain occupies 167-225; sequence RVKIKMEYIDNKLRRYTTFSKRKTGIMKKAYELSTLTGTQVMLLVASETGHVYTFATRK. 2 disordered regions span residues 270–360 and 418–449; these read YNIA…GGGS and LTASGSGASGSGTPVKNDASADKPLTIKQEFD. 2 stretches are compositionally biased toward low complexity: residues 317 to 331 and 345 to 354; these read SAPPAASCSAATASS and TNSGPSTSTA.

After germ band retraction, high levels of zygotic expression are observed in a distinct subset of peripheral tracheal cells distributed throughout the embryo and low levels in somatic muscle. Expressed in the future intervein tissue of the wing imaginal disk from the third instar larvae until eclosion of the adult fly (at protein level).

Its subcellular location is the nucleus. Its function is as follows. Required for the formation of intervein tissue of the wing. Acts in a dosage-dependent manner to suppress wing vein formation and promote development of intervein cells. Might play a role in the proper formation and maintenance of the trachea. This chain is Serum response factor homolog (bs), found in Drosophila melanogaster (Fruit fly).